The chain runs to 170 residues: Adenine phosphoribosyltransferase (170 aa).

The protein belongs to the purine/pyrimidine phosphoribosyltransferase family. Homodimer.

Its subcellular location is the cytoplasm. The enzyme catalyses AMP + diphosphate = 5-phospho-alpha-D-ribose 1-diphosphate + adenine. It functions in the pathway purine metabolism; AMP biosynthesis via salvage pathway; AMP from adenine: step 1/1. Functionally, catalyzes a salvage reaction resulting in the formation of AMP, that is energically less costly than de novo synthesis. This chain is Adenine phosphoribosyltransferase, found in Lactococcus lactis subsp. lactis (strain IL1403) (Streptococcus lactis).